The sequence spans 285 residues: 4-diphosphocytidyl-2-C-methyl-D-erythritol kinase (285 aa).

K12 is an active-site residue. Residue 94-104 (PAQAGMGGGSS) participates in ATP binding. Residue D136 is part of the active site.

Belongs to the GHMP kinase family. IspE subfamily.

It catalyses the reaction 4-CDP-2-C-methyl-D-erythritol + ATP = 4-CDP-2-C-methyl-D-erythritol 2-phosphate + ADP + H(+). It participates in isoprenoid biosynthesis; isopentenyl diphosphate biosynthesis via DXP pathway; isopentenyl diphosphate from 1-deoxy-D-xylulose 5-phosphate: step 3/6. In terms of biological role, catalyzes the phosphorylation of the position 2 hydroxy group of 4-diphosphocytidyl-2C-methyl-D-erythritol. In Paracidovorax citrulli (strain AAC00-1) (Acidovorax citrulli), this protein is 4-diphosphocytidyl-2-C-methyl-D-erythritol kinase.